Here is a 125-residue protein sequence, read N- to C-terminus: Large ribosomal subunit protein bL12 (125 aa).

This sequence belongs to the bacterial ribosomal protein bL12 family. Homodimer. Part of the ribosomal stalk of the 50S ribosomal subunit. Forms a multimeric L10(L12)X complex, where L10 forms an elongated spine to which 2 to 4 L12 dimers bind in a sequential fashion. Binds GTP-bound translation factors.

In terms of biological role, forms part of the ribosomal stalk which helps the ribosome interact with GTP-bound translation factors. Is thus essential for accurate translation. In Thermus thermophilus (strain ATCC BAA-163 / DSM 7039 / HB27), this protein is Large ribosomal subunit protein bL12.